Reading from the N-terminus, the 785-residue chain is Tripartite terminase subunit 1 (785 aa).

The segment at 197 to 225 adopts a C3H1-type zinc-finger fold; sequence CAVCFEELCVTANQGATIARRLADRICNH. The segment at 433–489 is disordered; the sequence is GGAADAPKGGAGPDDDGDRVAVEEGTRGLGAPGGGGEDEDRRRGPGGQGPETWGDIA. 696 to 703 contributes to the ATP binding site; the sequence is FASVYRCG.

The protein belongs to the herpesviridae TRM1 protein family. In terms of assembly, associates with TRM2 and TRM3 to form the tripartite terminase complex. Interacts with portal protein.

It is found in the host nucleus. Component of the molecular motor that translocates viral genomic DNA in empty capsid during DNA packaging. Forms a tripartite terminase complex together with TRM2 and TRM3 in the host cytoplasm. Once the complex reaches the host nucleus, it interacts with the capsid portal vertex. This portal forms a ring in which genomic DNA is translocated into the capsid. TRM1 carries an endonuclease activity that plays an important role for the cleavage of concatemeric viral DNA into unit length genomes. This chain is Tripartite terminase subunit 1, found in Human herpesvirus 1 (strain Angelotti) (HHV-1).